The sequence spans 443 residues: Glutamate-rich protein 1 (443 aa).

K12 is modified (N6-acetyllysine). A disordered region spans residues 15-333 (QRLFPPVPSG…DASEEDDTIT (319 aa)). Positions 42–54 (VTSEKVSQKHAEP) are enriched in basic and acidic residues. A compositionally biased stretch (polar residues) spans 87–97 (SCGSPENASSG). Basic residues-rich tracts occupy residues 109–124 (PKRR…KKFK) and 159–176 (KNKK…RKKA). The span at 205 to 226 (ACEEDGVDTSEEDPTLAGEEDV) shows a compositional bias: acidic residues. Residues S238 and S254 each carry the phosphoserine modification. Residues 250 to 266 (GADASEEDPTPAGEEDV) are compositionally biased toward acidic residues. T277 bears the Phosphothreonine mark. Basic and acidic residues predominate over residues 281–296 (DLTRAGEEDGKDTREE). Residues 297 to 332 (DGADASEEDPTWAGEEEGADSGEEDGADASEEDDTI) show a composition bias toward acidic residues.

This chain is Glutamate-rich protein 1 (ERICH1), found in Homo sapiens (Human).